The chain runs to 448 residues: Putative F-box/LRR-repeat protein At3g44810 (448 aa).

The F-box domain maps to 6–54 (TASLNCLPDELLVHVLSSLETKQAASTSVLSKRWRTLFAVRRNLDFDDS). 6 LRR repeats span residues 117–141 (VSELHLCLTSVTRRLHRFPSNVFRS), 143–165 (TLVKLTLGTNLFIVYFPSDTCLP), 190–213 (CPALEDLTIDQKSFPGLPNVVSSK), 228–251 (FDWFRTVALDTPNLVTLLYSTYAR), 290–313 (VRNVQMLHLTSSATEVISQCCKGG), and 421–443 (IVDSKKVQLTEDLMKLPSASSRL).

The protein is Putative F-box/LRR-repeat protein At3g44810 of Arabidopsis thaliana (Mouse-ear cress).